Reading from the N-terminus, the 1372-residue chain is DNA-directed RNA polymerase subunit beta'' (1372 aa).

Zn(2+) contacts are provided by cysteine 252, cysteine 321, cysteine 328, and cysteine 331.

Belongs to the RNA polymerase beta' chain family. RpoC2 subfamily. In terms of assembly, in plastids the minimal PEP RNA polymerase catalytic core is composed of four subunits: alpha, beta, beta', and beta''. When a (nuclear-encoded) sigma factor is associated with the core the holoenzyme is formed, which can initiate transcription. Requires Zn(2+) as cofactor.

The protein localises to the plastid. It is found in the organellar chromatophore. It catalyses the reaction RNA(n) + a ribonucleoside 5'-triphosphate = RNA(n+1) + diphosphate. DNA-dependent RNA polymerase catalyzes the transcription of DNA into RNA using the four ribonucleoside triphosphates as substrates. This is DNA-directed RNA polymerase subunit beta'' from Paulinella chromatophora.